The primary structure comprises 374 residues: RNA polymerase sigma factor SigA (374 aa).

The interval 141 to 211 (LAEANLRLVV…TRAIADQART (71 aa)) is sigma-70 factor domain-2. An Interaction with polymerase core subunit RpoC motif is present at residues 165 to 168 (DLIQ). The tract at residues 220–296 (ETINKLIRVQ…DQDATSPSDH (77 aa)) is sigma-70 factor domain-3. Positions 309–362 (VLDTLTDREENVLRLRFGLDDGRTRTLEEVGRVFGVTRERIRQIEAKALRKLRH) are sigma-70 factor domain-4. A DNA-binding region (H-T-H motif) is located at residues 335–354 (LEEVGRVFGVTRERIRQIEA).

Belongs to the sigma-70 factor family. RpoD/SigA subfamily. As to quaternary structure, interacts transiently with the RNA polymerase catalytic core.

Its subcellular location is the cytoplasm. Sigma factors are initiation factors that promote the attachment of RNA polymerase to specific initiation sites and are then released. This sigma factor is the primary sigma factor during exponential growth. This is RNA polymerase sigma factor SigA from Listeria innocua serovar 6a (strain ATCC BAA-680 / CLIP 11262).